We begin with the raw amino-acid sequence, 82 residues long: uncharacterized protein (82 aa).

This is an uncharacterized protein from Treponema pallidum (strain Nichols).